The following is a 520-amino-acid chain: Cytochrome P450 monooxygenase vrtE (520 aa).

The helical transmembrane segment at 16-36 threads the bilayer; the sequence is ALSLLHYVLGAIFLLLLFHML. The N-linked (GlcNAc...) asparagine glycan is linked to asparagine 137. Cysteine 459 is a heme binding site.

Belongs to the cytochrome P450 family. Requires heme as cofactor.

The protein resides in the membrane. Its pathway is secondary metabolite biosynthesis; terpenoid biosynthesis. Functionally, cytochrome P450 monooxygenase; part of the gene cluster that mediates the biosynthesis of viridicatumtoxin, a tetracycline-like fungal meroterpenoid with a unique, fused spirobicyclic ring system. The first step of the pathway is the production of the malonamoyl-CoA starter unit for the polyketide synthase vrtA. The aldolase vrtJ may be involved in the synthesis of the malonamate substrate for malonamoyl-CoA synthetase vrtB. The polyketide synthase vrtA then may utilize the malonamoyl-CoA starter unit, followed by sequential condensation of eight malonyl-CoA units to form the polyketide backbone. The cyclization of the last ring could be mediated by the lactamase-like protein vrtG. The proposed post-PKS tailoring steps are a hydroxylation at C5 catalyzed the cytochrome P450 monooxygenase vrtE, a hydroxylation at C12a catalyzed by VrtH and/or VrtI, and an O-methylation by the O-methyltransferase vrtF. VrtC is then proposed to catalyze the transfer of a geranyl group synthesized by vrtD to the aromatic C ring of the tetracyclic polyketide intermediate of viridicatumtoxin to yield previridicatumtoxin. Finally, the cytochrome P450 monooxygenase vrtK catalyzes the spirocyclization of the geranyl moiety of previridicatumtoxin to afford viridicatumtoxin. The chain is Cytochrome P450 monooxygenase vrtE from Penicillium aethiopicum.